The following is a 411-amino-acid chain: Lissencephaly-1 homolog (411 aa).

The LisH domain maps to 9-41 (QREELNQAIADYLGTNGYADSLEAFRKEADLST). Positions 56–83 (TSVIRLQKKVMELEAKLTEAEKEVIEGA) form a coiled coil. 7 WD repeats span residues 106-147 (GHRA…RTLK), 148-187 (GHTDSVQDVAFDAQGKLLVSCSADLSIKLWDFQQSYECVK), 191-230 (GHDHNVSSVAFVPAGDYVLSASRDRTIKMWEVATGYCVKT), 233-272 (GHREWVRMVRVHIEGSIFATCSNDHTIRVWLTNSKDCKVE), 275-334 (DHEH…CLLT), 337-376 (GHDNWVRGLAFHPGGKYLVSASDDKTIRVWDLRNKRCMKT), and 379-411 (AHQHFCTSIDFHKAHPYVISGSVDQTVKVWECR).

The protein belongs to the WD repeat LIS1/nudF family.

It is found in the cytoplasm. Its subcellular location is the cytoskeleton. The protein resides in the microtubule organizing center. It localises to the centrosome. In terms of biological role, positively regulates the activity of the minus-end directed microtubule motor protein dynein. May enhance dynein-mediated microtubule sliding by targeting dynein to the microtubule plus end. Required for several dynein- and microtubule-dependent processes. The polypeptide is Lissencephaly-1 homolog (Drosophila grimshawi (Hawaiian fruit fly)).